Here is a 91-residue protein sequence, read N- to C-terminus: N(2)-fixation sustaining protein CowN (91 aa).

Belongs to the CowN family.

In terms of biological role, is required to sustain N(2)-dependent growth in the presence of low levels of carbon monoxide (CO). Probably acts by protecting the N(2) fixation ability of the nitrogenase complex, which is inactivated in the presence of CO. In Gluconacetobacter diazotrophicus (strain ATCC 49037 / DSM 5601 / CCUG 37298 / CIP 103539 / LMG 7603 / PAl5), this protein is N(2)-fixation sustaining protein CowN.